Consider the following 404-residue polypeptide: Cytochrome b (404 aa).

The next 4 membrane-spanning stretches (helical) occupy residues 35–55 (FGSL…FLAM), 79–101 (WLLR…LHFF), 116–136 (VWCL…IGYV), and 182–202 (FFSL…LHLA). The heme b site is built by His85 and His99. Heme b contacts are provided by His186 and His200. Residue His205 coordinates a ubiquinone. A run of 4 helical transmembrane segments spans residues 228-248 (IYVK…IFVF), 292-312 (LGGV…PFIN), 324-344 (IHQK…WIGC), and 351-370 (YVTI…AITP).

This sequence belongs to the cytochrome b family. In terms of assembly, the main subunits of complex b-c1 are: cytochrome b, cytochrome c1 and the Rieske protein. It depends on heme b as a cofactor.

The protein localises to the mitochondrion inner membrane. Component of the ubiquinol-cytochrome c reductase complex (complex III or cytochrome b-c1 complex) that is part of the mitochondrial respiratory chain. The b-c1 complex mediates electron transfer from ubiquinol to cytochrome c. Contributes to the generation of a proton gradient across the mitochondrial membrane that is then used for ATP synthesis. The polypeptide is Cytochrome b (MT-CYB) (Marchantia polymorpha (Common liverwort)).